The following is a 512-amino-acid chain: Cytochrome P450 84A4 (512 aa).

Residues 7–24 traverse the membrane as a helical segment; it reads LIVLVPLLLFLFPHLLLR. Cys447 lines the heme pocket.

This sequence belongs to the cytochrome P450 family. Heme serves as cofactor. Expressed in seedlings, roots, stems and inflorescence nodes. Low or no expression in leaves, flowers, seeds and lignifying tissue.

It is found in the membrane. Its function is as follows. Cytochrome P450 involved in the production of catechol-substituted substrates needed for the arabidopyrones biosynthesis. Converts p-coumaraldehyde into caffealdehyde. This Arabidopsis thaliana (Mouse-ear cress) protein is Cytochrome P450 84A4 (CYP84A4).